A 404-amino-acid polypeptide reads, in one-letter code: Retrotransposable element SLACS 45 kDa protein (404 aa).

2 stretches are compositionally biased toward polar residues: residues 1-11 (MVRNLRSSEPQ) and 29-41 (PALNLQWPGQKQV). Disordered stretches follow at residues 1-62 (MVRN…NTSI), 86-111 (KKAAHSPLKTKPVNKEGNRKKYGRPP), 134-251 (LGKG…KKGA), 317-341 (CRQQHPGGPPDSLHPDNNRESGAVS), and 369-404 (PKLPVPEQGDYPNARSGIGTGAPHSPHHCDRSAGPP). A compositionally biased stretch (basic and acidic residues) spans 98–111 (VNKEGNRKKYGRPP). Residues 141–151 (TAHTKSNQSRV) are compositionally biased toward polar residues. A C2H2-type zinc finger spans residues 300–321 (CPVCGFAHPEETITVTHCRQQH). A compositionally biased stretch (basic and acidic residues) spans 395-404 (HHCDRSAGPP).

In Trypanosoma brucei gambiense, this protein is Retrotransposable element SLACS 45 kDa protein.